Consider the following 1357-residue polypeptide: DNA-directed RNA polymerase subunit beta (1357 aa).

Belongs to the RNA polymerase beta chain family. In terms of assembly, the RNAP catalytic core consists of 2 alpha, 1 beta, 1 beta' and 1 omega subunit. When a sigma factor is associated with the core the holoenzyme is formed, which can initiate transcription.

It catalyses the reaction RNA(n) + a ribonucleoside 5'-triphosphate = RNA(n+1) + diphosphate. In terms of biological role, DNA-dependent RNA polymerase catalyzes the transcription of DNA into RNA using the four ribonucleoside triphosphates as substrates. This chain is DNA-directed RNA polymerase subunit beta, found in Pseudomonas putida (Arthrobacter siderocapsulatus).